A 219-amino-acid polypeptide reads, in one-letter code: GTP-binding protein drn-1 (219 aa).

GTP is bound by residues G37 to S44, N56 to T62, D85 to S89, N146 to D149, and A177 to K178. The Effector region motif lies at Y59 to Y67. C216 is modified (cysteine methyl ester). C216 carries S-geranylgeranyl cysteine lipidation. The propeptide at H217–M219 is removed in mature form.

Belongs to the small GTPase superfamily. Di-Ras family. In terms of assembly, interacts with epac-1 (via C-terminus). Expressed specifically in neurons including the nerve ring, ventral and dorsal nerve cord motor neurons and tail ganglia.

It is found in the cell membrane. Functionally, displays low GTPase activity and exists predominantly in the GTP-bound form. Together with epac-1, may regulate acetylcholine release at the neuromuscular junctions probably downstream of G-protein gsa-1 and adenylate cyclase acy-1. This is GTP-binding protein drn-1 from Caenorhabditis elegans.